The following is a 379-amino-acid chain: ATP-sensitive inward rectifier potassium channel 10 (379 aa).

Over 1–61 (MTSVAKVYYS…LKDLWTTFID (61 aa)) the chain is Cytoplasmic. Residue Arg-36 coordinates 1,2-dioctanoyl-sn-glycero-3-phospho-(1D-myo-inositol-4,5-bisphosphate). A helical membrane pass occupies residues 62–88 (MQWRYKLLLFSATFAGTWFLFGVVWYL). The Extracellular portion of the chain corresponds to 89–114 (VAVAHGDLLELGPPANHTPCVVQVHT). Residues Cys-108 and Cys-140 are joined by a disulfide bond. Positions 115 to 131 (LTGAFLFSLESQTTIGY) form an intramembrane region, discontinuously helical; Pore-forming. A Selectivity filter motif is present at residues 128–133 (TIGYGF). Residues 132–140 (GFRYISEEC) lie on the Extracellular side of the membrane. Residues 141–166 (PLAIVLLIAQLVLTTILEIFITGTFL) form a helical membrane-spanning segment. Over 167–379 (AKIARPKKRA…SALSVRISNV (213 aa)) the chain is Cytoplasmic. Residues Lys-168, Arg-171, and Lys-173 each contribute to the 1,2-dioctanoyl-sn-glycero-3-phospho-(1D-myo-inositol-4,5-bisphosphate) site. Position 210-217 (210-217 (GCQVTGKL)) interacts with ATP.

It belongs to the inward rectifier-type potassium channel (TC 1.A.2.1) family. KCNJ10 subfamily. Homotetramer. In kidney cells, it forms heteromeric channels with Kir5.1/KCNJ16; this interaction is required for KCNJ16 localization to the basolateral membrane. Interacts with MAGI1, alone and possibly as a heteromer with KCNJ16; this interaction may facilitate KCNJ10/KCNJ16 potassium channel expression at the basolateral membrane in kidney cells. Interacts with PATJ. Predominantly expressed in the brain, including in glial cells of the cerebellum and forebrain. Expressed at lower levels in the kidney, and other peripheral tissues.

The protein resides in the membrane. It is found in the basolateral cell membrane. It catalyses the reaction K(+)(in) = K(+)(out). Channel activity is strongly regulated by variations of cytosolic pH; channels are activated by alkaline and inhibited by acidic pH values. Activated by phosphatidylinositol 4,5 biphosphate (PtdIns(4,5)P2). Inhibited by Ba(2+) and Cs(+). In terms of biological role, may be responsible for potassium buffering action of glial cells in the brain. Inward rectifier potassium channels are characterized by a greater tendency to allow potassium to flow into the cell rather than out of it. Their voltage dependence is regulated by the concentration of extracellular potassium; as external potassium is raised, the voltage range of the channel opening shifts to more positive voltages. The inward rectification is mainly due to the blockage of outward current by internal magnesium. Can be blocked by extracellular barium and cesium. In the kidney, together with KCNJ16, mediates basolateral K(+) recycling in distal tubules; this process is critical for Na(+) reabsorption at the tubules. The protein is ATP-sensitive inward rectifier potassium channel 10 of Rattus norvegicus (Rat).